A 368-amino-acid chain; its full sequence is 3-isopropylmalate dehydrogenase (368 aa).

Residue 79–92 (GPRYEGLPWDLRPE) coordinates NAD(+). Residues arginine 99, arginine 109, arginine 138, and aspartate 228 each contribute to the substrate site. The Mg(2+) site is built by aspartate 228, aspartate 252, and aspartate 256. 292–304 (GSAPDIAGQDRAN) is an NAD(+) binding site.

It belongs to the isocitrate and isopropylmalate dehydrogenases family. LeuB type 1 subfamily. Homodimer. Requires Mg(2+) as cofactor. Mn(2+) is required as a cofactor.

The protein localises to the cytoplasm. It carries out the reaction (2R,3S)-3-isopropylmalate + NAD(+) = 4-methyl-2-oxopentanoate + CO2 + NADH. It participates in amino-acid biosynthesis; L-leucine biosynthesis; L-leucine from 3-methyl-2-oxobutanoate: step 3/4. In terms of biological role, catalyzes the oxidation of 3-carboxy-2-hydroxy-4-methylpentanoate (3-isopropylmalate) to 3-carboxy-4-methyl-2-oxopentanoate. The product decarboxylates to 4-methyl-2 oxopentanoate. The polypeptide is 3-isopropylmalate dehydrogenase (Symbiobacterium thermophilum (strain DSM 24528 / JCM 14929 / IAM 14863 / T)).